The chain runs to 187 residues: Probable cobalt-precorrin-6B C(15)-methyltransferase (decarboxylating) (187 aa).

S-adenosyl-L-methionine contacts are provided by residues threonine 15, 39-43, glutamate 60, and alanine 89; that span reads GSCTG.

Belongs to the methyltransferase superfamily. Archaeal-type CbiT family.

The catalysed reaction is Co-precorrin-6B + S-adenosyl-L-methionine = Co-precorrin-7 + S-adenosyl-L-homocysteine + CO2. Its pathway is cofactor biosynthesis; adenosylcobalamin biosynthesis; cob(II)yrinate a,c-diamide from sirohydrochlorin (anaerobic route): step 8/10. Functionally, catalyzes the methylation of C-15 in cobalt-precorrin-6B followed by the decarboxylation of C-12 to form cobalt-precorrin-7. The chain is Probable cobalt-precorrin-6B C(15)-methyltransferase (decarboxylating) from Halobacterium salinarum (strain ATCC 700922 / JCM 11081 / NRC-1) (Halobacterium halobium).